The primary structure comprises 624 residues: E3 ubiquitin-protein ligase RLIM (624 aa).

At Met-1 the chain carries N-acetylmethionine. Positions 1–11 are enriched in basic and acidic residues; that stretch reads MENSDSNDKGS. Disordered regions lie at residues 1-25, 72-251, 257-276, 291-363, and 424-522; these read MENSDSNDKGSGDQSAAQRRSQMDR, KEGP…SQTF, NETEGSSRTRHHVTLRQQIS, TRNA…RGGF, and SDSE…TFDE. Polar residues predominate over residues 104–132; that stretch reads SVRQTGNTTRSGQRGNQSWRAVSRTNPNS. Over residues 142–153 the composition is skewed to low complexity; it reads NVNRNNGSQNSE. The residue at position 164 (Ser-164) is a Phosphoserine. The span at 165–188 shows a compositional bias: polar residues; sequence GENVENNSQRQVENPRSESTSARP. A phosphoserine mark is found at Ser-195, Ser-228, Ser-230, and Ser-276. The span at 214–229 shows a compositional bias: basic and acidic residues; sequence RSPDHRRTRARAERSR. Positions 291–315 are enriched in polar residues; that stretch reads TRNASQGAGSSDTAASGESTGSGQR. Residues 329 to 339 are compositionally biased toward basic and acidic residues; it reads RPGEYRQRDSI. Positions 340-356 are enriched in polar residues; the sequence is ASRTRSRSQTPNNTVTY. Residues 445–454 are compositionally biased toward gly residues; the sequence is GRGGSGGGSS. Low complexity predominate over residues 455-507; the sequence is SGSSSSSSSSSSSSSSSSSSSSPSSSSGGESSETSSDLFEGSNEGSSSSGSSG. The segment at 570-611 adopts an RING-type zinc-finger fold; sequence CSVCITEYTEGNKLRKLPCSHEYHVHCIDRWLSENSTCPICR. The short motif at 621-624 is the PDZ-binding element; the sequence is ESVV.

The protein belongs to the RNF12 family. Interacts with LIM/homeobox factors such as LHX3. Interacts with LDB1, LDB2 and SIN3A. Interacts with LIMK1. Interacts (via N-terminus) with TERF1. Interacts (via C-terminus) with ESR1. As to expression, expressed in many tissues.

It is found in the nucleus. The enzyme catalyses S-ubiquitinyl-[E2 ubiquitin-conjugating enzyme]-L-cysteine + [acceptor protein]-L-lysine = [E2 ubiquitin-conjugating enzyme]-L-cysteine + N(6)-ubiquitinyl-[acceptor protein]-L-lysine.. It participates in protein modification; protein ubiquitination. Functionally, E3 ubiquitin-protein ligase. Acts as a negative coregulator for LIM homeodomain transcription factors by mediating the ubiquitination and subsequent degradation of LIM cofactors LDB1 and LDB2 and by mediating the recruitment the SIN3a/histone deacetylase corepressor complex. Ubiquitination and degradation of LIM cofactors LDB1 and LDB2 allows DNA-bound LIM homeodomain transcription factors to interact with other protein partners such as RLIM. Plays a role in telomere length-mediated growth suppression by mediating the ubiquitination and degradation of TERF1. By targeting ZFP42 for degradation, acts as an activator of random inactivation of X chromosome in the embryo, a stochastic process in which one X chromosome is inactivated to minimize sex-related dosage differences of X-encoded genes in somatic cells of female placental mammals. This is E3 ubiquitin-protein ligase RLIM (RLIM) from Homo sapiens (Human).